A 402-amino-acid polypeptide reads, in one-letter code: Deoxyguanosinetriphosphate triphosphohydrolase-like protein (402 aa).

Positions 20–39 (PAFSRGRLVPEPESPTRTPF) are disordered. The HD domain occupies 73 to 217 (RLTHTIEVAQ…AAIADDIAYN (145 aa)).

The protein belongs to the dGTPase family. Type 2 subfamily.

This is Deoxyguanosinetriphosphate triphosphohydrolase-like protein from Brucella ovis (strain ATCC 25840 / 63/290 / NCTC 10512).